Reading from the N-terminus, the 1805-residue chain is Kinesin-like protein KIF13A (1805 aa).

The Kinesin motor domain occupies Lys-5 to Ile-352. Position 102–109 (Gly-102–Ser-109) interacts with ATP. Positions Asn-359–Glu-436 form a coiled coil. The FHA domain maps to His-469 to Val-519. Positions Glu-556–Asp-567 are enriched in basic and acidic residues. 2 disordered regions span residues Glu-556 to Glu-575 and Gln-633 to Ala-656. Coiled coils occupy residues Val-602–Lys-775 and Asp-1100–Val-1138. Ser-636 carries the post-translational modification Phosphoserine. Ser-1287 bears the Phosphoserine mark. Positions Thr-1385–Pro-1396 are enriched in polar residues. A disordered region spans residues Thr-1385–Asp-1404. Phosphoserine is present on residues Ser-1454, Ile-1481, Ser-1490, and Met-1494. Positions Pro-1507–Glu-1531 are disordered. A coiled-coil region spans residues Glu-1518–Gln-1547. Residues His-1519 to Asp-1528 are compositionally biased toward basic and acidic residues. Ser-1529 and Ser-1572 each carry phosphoserine. Residues Met-1612–Asp-1621 are compositionally biased toward low complexity. Residues Met-1612–Arg-1645 form a disordered region. Phosphoserine is present on residues Ser-1648 and Ser-1698. The interval Gly-1749–His-1779 is disordered. Residues Thr-1751 to Lys-1771 show a composition bias toward polar residues.

It belongs to the TRAFAC class myosin-kinesin ATPase superfamily. Kinesin family. Interacts with AP2B1. Interacts with ZFYVE26. Interacts with AP1G1 and AP1G2. Widely expressed, with highest levels in heart, brain and skeletal muscle.

It localises to the cytoplasm. The protein resides in the cytoskeleton. Its subcellular location is the microtubule organizing center. The protein localises to the centrosome. It is found in the midbody. It localises to the endosome membrane. The protein resides in the golgi apparatus membrane. Functionally, plus end-directed microtubule-dependent motor protein involved in intracellular transport and regulating various processes such as mannose-6-phosphate receptor (M6PR) transport to the plasma membrane, endosomal sorting during melanosome biogenesis and cytokinesis. Mediates the transport of M6PR-containing vesicles from trans-Golgi network to the plasma membrane via direct interaction with the AP-1 complex. During melanosome maturation, required for delivering melanogenic enzymes from recycling endosomes to nascent melanosomes by creating peripheral recycling endosomal subdomains in melanocytes. Also required for the abscission step in cytokinesis: mediates translocation of ZFYVE26, and possibly TTC19, to the midbody during cytokinesis. This chain is Kinesin-like protein KIF13A (KIF13A), found in Homo sapiens (Human).